The chain runs to 133 residues: Putative redox protein FMP46, mitochondrial (133 aa).

Residues 1–21 (MSFWKTLQRQPRTISLFTNDI) constitute a mitochondrion transit peptide. The active site involves cysteine 97.

Belongs to the FMP46 family.

The protein localises to the mitochondrion. Putative mitochondrial redox protein which could be involved in the reduction of small toxic molecules. This is Putative redox protein FMP46, mitochondrial (FMP46) from Saccharomyces cerevisiae (strain ATCC 204508 / S288c) (Baker's yeast).